Here is a 644-residue protein sequence, read N- to C-terminus: Biosynthetic arginine decarboxylase (644 aa).

K113 is modified (N6-(pyridoxal phosphate)lysine). 293-303 is a binding site for substrate; sequence FDVGGGLGVDY.

The protein belongs to the Orn/Lys/Arg decarboxylase class-II family. SpeA subfamily. It depends on Mg(2+) as a cofactor. The cofactor is pyridoxal 5'-phosphate.

It carries out the reaction L-arginine + H(+) = agmatine + CO2. Functionally, catalyzes the biosynthesis of agmatine from arginine. This Pasteurella multocida (strain Pm70) protein is Biosynthetic arginine decarboxylase.